The chain runs to 366 residues: Transcription factor bHLH74 (366 aa).

A compositionally biased stretch (gly residues) spans Met-1–Met-11. Disordered stretches follow at residues Met-1–Ser-20 and Gly-123–Glu-201. Composition is skewed to basic and acidic residues over residues Gly-123 to Ser-134 and Lys-159 to Arg-170. Residues Gln-212–Leu-262 enclose the bHLH domain.

Homodimer. Interacts with IBH1. Binds reversibly to CRY2 after blue light illumination. As to expression, expressed constitutively in roots, leaves, stems, and flowers.

Its subcellular location is the nucleus. In terms of biological role, transcriptional activator involved in cell elongation. Regulates the expression of a subset of genes involved in cell expansion by binding to the G-box motif. Binds to chromatin DNA of the FT gene and promotes its expression, and thus triggers flowering in response to blue light. The polypeptide is Transcription factor bHLH74 (BHLH74) (Arabidopsis thaliana (Mouse-ear cress)).